A 326-amino-acid polypeptide reads, in one-letter code: Glycolipid sulfotransferase MRA_1383 (326 aa).

A 3'-phosphoadenylyl sulfate-binding site is contributed by 40–45 (KSGLTW). His97 functions as the Proton acceptor in the catalytic mechanism. 116–124 (RDPRDAAVS) provides a ligand contact to 3'-phosphoadenylyl sulfate.

This sequence belongs to the sulfotransferase 1 family.

Its function is as follows. Involved in the synthesis of cell wall sulfolipids. This chain is Glycolipid sulfotransferase MRA_1383, found in Mycobacterium tuberculosis (strain ATCC 25177 / H37Ra).